The chain runs to 393 residues: Cytochrome b (393 aa).

The next 4 membrane-spanning stretches (helical) occupy residues 33–53, 77–98, 113–133, and 178–198; these read FGSLLGLCLMIQILTGFFLAM, WFLRNTHANGASILFICMYLHM, WNIGVIMFFLMMTTAFVGYVL, and FFAIHFTLPFITVGLTMLHLL. 2 residues coordinate heme b: His-83 and His-97. Residues His-182 and His-196 each contribute to the heme b site. His-201 serves as a coordination point for a ubiquinone. 4 helical membrane passes run 226 to 246, 288 to 308, 320 to 340, and 347 to 367; these read YKDVLGFLLLLAALTALALFA, LGGVAALALSILALMVLPFIH, LSQLVFWLFVANIAILTWIGG, and FIIIGRIASVSYFTLILILMP.

It belongs to the cytochrome b family. As to quaternary structure, the cytochrome bc1 complex contains 3 respiratory subunits (MT-CYB, CYC1 and UQCRFS1), 2 core proteins (UQCRC1 and UQCRC2) and probably 6 low-molecular weight proteins. The cofactor is heme b.

It localises to the mitochondrion inner membrane. Component of the ubiquinol-cytochrome c reductase complex (complex III or cytochrome b-c1 complex) that is part of the mitochondrial respiratory chain. The b-c1 complex mediates electron transfer from ubiquinol to cytochrome c. Contributes to the generation of a proton gradient across the mitochondrial membrane that is then used for ATP synthesis. The sequence is that of Cytochrome b (mt-cyb) from Synbranchus marmoratus (Marbled swamp eel).